Reading from the N-terminus, the 166-residue chain is Large ribosomal subunit protein uL18c (166 aa).

Residues 1–44 (MAAATSLSFFHSTLASSSSSSVQQLSLPPKFVNFRPQTLPLIQA) constitute a chloroplast transit peptide.

This sequence belongs to the universal ribosomal protein uL18 family. As to quaternary structure, component of the chloroplast large ribosomal subunit (LSU). Mature 70S chloroplast ribosomes of higher plants consist of a small (30S) and a large (50S) subunit. The 30S small subunit contains 1 molecule of ribosomal RNA (16S rRNA) and 24 different proteins. The 50S large subunit contains 3 rRNA molecules (23S, 5S and 4.5S rRNA) and 33 different proteins.

It is found in the plastid. Its subcellular location is the chloroplast. Functionally, component of the chloroplast ribosome (chloro-ribosome), a dedicated translation machinery responsible for the synthesis of chloroplast genome-encoded proteins, including proteins of the transcription and translation machinery and components of the photosynthetic apparatus. In Spinacia oleracea (Spinach), this protein is Large ribosomal subunit protein uL18c (RPL18).